The chain runs to 183 residues: PLAT domain-containing protein 2 (183 aa).

An N-terminal signal peptide occupies residues 1–25 (MMPRRDVLFLSLLLVIATVSAVALA). The 128-residue stretch at 31 to 158 (CVYTFFLRTG…SPYELSAVRN (128 aa)) folds into the PLAT domain.

The protein resides in the endoplasmic reticulum. Its function is as follows. Involved in response to abiotic stress. This chain is PLAT domain-containing protein 2, found in Arabidopsis thaliana (Mouse-ear cress).